Consider the following 329-residue polypeptide: Endonuclease 8-like 2 (329 aa).

Pro-2 acts as the Schiff-base intermediate with DNA in catalysis. The active-site Proton donor is the Glu-3. Catalysis depends on Lys-50, which acts as the Proton donor; for beta-elimination activity. Position 50 is an N6-acetyllysine (Lys-50). At Ser-68 the chain carries Phosphoserine. Residues 88-112 (GPSAQEPSAGPSGSGEPVPSRSAET) form a disordered region. N6-acetyllysine is present on Lys-150. Asn-227 contacts DNA. An FPG-type zinc finger spans residues 280–316 (QIYQKEQCPSGHQVMKETFGPPDGLQRLTWWCPQCQP). Residue Arg-306 is the Proton donor; for delta-elimination activity of the active site.

It belongs to the FPG family. In terms of assembly, binds EP300.

It is found in the nucleus. The catalysed reaction is 2'-deoxyribonucleotide-(2'-deoxyribose 5'-phosphate)-2'-deoxyribonucleotide-DNA = a 3'-end 2'-deoxyribonucleotide-(2,3-dehydro-2,3-deoxyribose 5'-phosphate)-DNA + a 5'-end 5'-phospho-2'-deoxyribonucleoside-DNA + H(+). Its activity is regulated as follows. Acetylation of Lys-50 leads to loss of DNA nicking activity. Involved in base excision repair of DNA damaged by oxidation or by mutagenic agents. Has DNA glycosylase activity towards 5-hydroxyuracil and other oxidized derivatives of cytosine with a preference for mismatched double-stranded DNA (DNA bubbles). Has low or no DNA glycosylase activity towards thymine glycol, 2-hydroxyadenine, hypoxanthine and 8-oxoguanine. Has AP (apurinic/apyrimidinic) lyase activity and introduces nicks in the DNA strand. Cleaves the DNA backbone by beta-delta elimination to generate a single-strand break at the site of the removed base with both 3'- and 5'-phosphates. The chain is Endonuclease 8-like 2 (Neil2) from Mus musculus (Mouse).